A 447-amino-acid chain; its full sequence is Mannose/glucose-specific lectin (447 aa).

Tandem repeats lie at residues 1–149 (SLKG…VQPV), 150–295 (PHGT…VKPR), and 296–447 (DVEG…DTAV). A 3 X approximate tandem repeats region spans residues 1–447 (SLKGMISVGP…GIFVKPDTAV (447 aa)). 3 consecutive Jacalin-type lectin domains span residues 5–148 (MISV…FVQP), 153–294 (TISF…YVKP), and 300–443 (SISI…FVKP).

Belongs to the jacalin lectin family. Homodimer. Post-translationally, the N-terminus is blocked.

Its function is as follows. Mannose/glucose specific lectin. Shows agglutinating activity against rabbit erythrocytes. This is Mannose/glucose-specific lectin from Parkia platycephala.